We begin with the raw amino-acid sequence, 247 residues long: Adenosylcobinamide-GDP ribazoletransferase (247 aa).

5 helical membrane passes run 34–54 (IITFPLIGLLLGAISGLVFMV), 59–79 (CGVPLAALFSVLVLALMTGGF), 113–133 (GGLALIFVVLAKILVLSELAL), 138–158 (ILASLAAACAVSRGTAALLMY), and 194–214 (VLLPGMHGVAAMVVTMVAIFI).

Belongs to the CobS family. Mg(2+) is required as a cofactor.

It localises to the cell inner membrane. It carries out the reaction alpha-ribazole + adenosylcob(III)inamide-GDP = adenosylcob(III)alamin + GMP + H(+). The catalysed reaction is alpha-ribazole 5'-phosphate + adenosylcob(III)inamide-GDP = adenosylcob(III)alamin 5'-phosphate + GMP + H(+). The protein operates within cofactor biosynthesis; adenosylcobalamin biosynthesis; adenosylcobalamin from cob(II)yrinate a,c-diamide: step 7/7. Functionally, joins adenosylcobinamide-GDP and alpha-ribazole to generate adenosylcobalamin (Ado-cobalamin). Also synthesizes adenosylcobalamin 5'-phosphate from adenosylcobinamide-GDP and alpha-ribazole 5'-phosphate. The protein is Adenosylcobinamide-GDP ribazoletransferase of Escherichia coli (strain 55989 / EAEC).